Reading from the N-terminus, the 189-residue chain is dCTP deaminase (189 aa).

Residues 112–117, 136–138, glutamine 157, tyrosine 171, and glutamine 181 contribute to the dCTP site; these read KSTYAR and TLE. Glutamate 138 serves as the catalytic Proton donor/acceptor.

It belongs to the dCTP deaminase family. As to quaternary structure, homotrimer.

The enzyme catalyses dCTP + H2O + H(+) = dUTP + NH4(+). Its pathway is pyrimidine metabolism; dUMP biosynthesis; dUMP from dCTP (dUTP route): step 1/2. In terms of biological role, catalyzes the deamination of dCTP to dUTP. The protein is dCTP deaminase of Xanthomonas euvesicatoria pv. vesicatoria (strain 85-10) (Xanthomonas campestris pv. vesicatoria).